We begin with the raw amino-acid sequence, 230 residues long: Urease accessory protein UreE (230 aa).

Basic residues predominate over residues 200-210 (HAIHSHGTGHT). The interval 200–230 (HAIHSHGTGHTHSHDHDHSHSHGDHDHDHKH) is disordered. A compositionally biased stretch (basic and acidic residues) spans 211 to 230 (HSHDHDHSHSHGDHDHDHKH).

This sequence belongs to the UreE family.

The protein localises to the cytoplasm. Functionally, involved in urease metallocenter assembly. Binds nickel. Probably functions as a nickel donor during metallocenter assembly. The chain is Urease accessory protein UreE from Yersinia enterocolitica serotype O:8 / biotype 1B (strain NCTC 13174 / 8081).